A 490-amino-acid chain; its full sequence is Cytochrome P450 2C25 (490 aa).

A heme-binding site is contributed by Cys435.

This sequence belongs to the cytochrome P450 family. Heme serves as cofactor.

It localises to the endoplasmic reticulum membrane. The protein resides in the microsome membrane. It carries out the reaction an organic molecule + reduced [NADPH--hemoprotein reductase] + O2 = an alcohol + oxidized [NADPH--hemoprotein reductase] + H2O + H(+). Functionally, catalyzes the hydroxylation of tolbutamide and the N-demethylation of aminopyrine and benzphetamine. Also has testosterone hydroxylase (16 beta) activity. In Mesocricetus auratus (Golden hamster), this protein is Cytochrome P450 2C25 (CYP2C25).